The primary structure comprises 95 residues: Enhancer of yellow 2 transcription factor (95 aa).

Belongs to the ENY2 family. Component of the nuclear pore complex (NPC)-associated AMEX complex (anchoring and mRNA export complex), composed of at least e(y)2 and xmas-2. Component of the SAGA transcription coactivator-HAT complexes, at least composed of Ada2b, e(y)2, Pcaf/Gcn5, Taf10 and Nipped-A/Trrap. Within the SAGA complex, e(y)2, Sgf11, and not/nonstop form an additional subcomplex of SAGA called the DUB module (deubiquitination module). Component of the THO complex, composed of at least e(y)2, HPR1, THO2, THOC5, THOC6 and THOC7. Interacts with e(y)1. Interacts with su(Hw) (via zinc fingers). Interacts with xmas-2; required for localization to the nuclear periphery. Interacts with the nuclear pore complex (NPC).

The protein localises to the nucleus. It localises to the nucleoplasm. Its subcellular location is the cytoplasm. Involved in mRNA export coupled transcription activation by association with both the AMEX and the SAGA complexes. The SAGA complex is a multiprotein complex that activates transcription by remodeling chromatin and mediating histone acetylation and deubiquitination. Within the SAGA complex, participates in a subcomplex that specifically deubiquitinates histone H2B. The SAGA complex is recruited to specific gene promoters by activators, where it is required for transcription. Required for nuclear receptor-mediated transactivation. Involved in transcription elongation by recruiting the THO complex onto nascent mRNA. The AMEX complex functions in docking export-competent ribonucleoprotein particles (mRNPs) to the nuclear entrance of the nuclear pore complex (nuclear basket). AMEX participates in mRNA export and accurate chromatin positioning in the nucleus by tethering genes to the nuclear periphery. The polypeptide is Enhancer of yellow 2 transcription factor (Drosophila virilis (Fruit fly)).